Consider the following 1577-residue polypeptide: Vacuolar protein sorting/targeting protein PEP1 (1577 aa).

Residues 1–21 (MILLHFVYSLWALLLIPLINA) form the signal peptide. The Lumenal segment spans residues 22-1391 (EEFTPKVTKT…EFKEKYSVSA (1370 aa)). BNR repeat units follow at residues 58 to 68 (ISFDDGETWEK) and 101 to 111 (YITNDQGKSWE). N-linked (GlcNAc...) asparagine glycans are attached at residues N121 and N168. 2 BNR repeats span residues 179-187 (SNDGGKSFS) and 414-423 (ISVDNGLTWT). Residue N445 is glycosylated (N-linked (GlcNAc...) asparagine). BNR repeat units follow at residues 485 to 495 (FISRDGGLTWK), 531 to 541 (YYSLDQGKTWT), and 762 to 771 (YISHDGGQTI). N791 is a glycosylation site (N-linked (GlcNAc...) asparagine). Residues 859 to 869 (YLTNDGGETFT) form a BNR 8 repeat. N1008 is a glycosylation site (N-linked (GlcNAc...) asparagine). 2 BNR repeats span residues 1141–1150 (FFTTDGGETW) and 1183–1192 (YSTDFGKTWK). N-linked (GlcNAc...) asparagine glycosylation occurs at N1301. The chain crosses the membrane as a helical span at residues 1392–1412 (GPFAFIFISILLIIFFAAWFV). The Cytoplasmic segment spans residues 1413 to 1577 (YDRGIRRNGG…DSTAPSNENQ (165 aa)). A disordered region spans residues 1531-1577 (DDVPTLEEEHTSYTDQPTTTDVPDALPEGNEENIDRPDSTAPSNENQ).

Belongs to the VPS10-related sortilin family.

It is found in the golgi apparatus. The protein resides in the trans-Golgi network membrane. It localises to the prevacuolar compartment membrane. Functionally, functions as a sorting receptor in the Golgi compartment required for the intracellular sorting and delivery of soluble vacuolar proteins, like carboxypeptidase Y (CPY) and proteinase A. Executes multiple rounds of sorting by cycling between the late Golgi and a prevacuolar endosome-like compartment. Binds the Golgi-modified P2 form of CPY, and this interaction is dependent on the presence of an intact CPY vacuolar protein sorting signal. The protein is Vacuolar protein sorting/targeting protein PEP1 (PEP1) of Saccharomyces cerevisiae (strain Lalvin EC1118 / Prise de mousse) (Baker's yeast).